We begin with the raw amino-acid sequence, 257 residues long: 5'-nucleotidase SurE (257 aa).

4 residues coordinate a divalent metal cation: Asp8, Asp9, Ser40, and Asn92.

The protein belongs to the SurE nucleotidase family. Requires a divalent metal cation as cofactor.

The protein resides in the cytoplasm. It carries out the reaction a ribonucleoside 5'-phosphate + H2O = a ribonucleoside + phosphate. Nucleotidase that shows phosphatase activity on nucleoside 5'-monophosphates. This chain is 5'-nucleotidase SurE, found in Rhizobium leguminosarum bv. trifolii (strain WSM2304).